A 129-amino-acid chain; its full sequence is Small ribosomal subunit protein uS11 (129 aa).

It belongs to the universal ribosomal protein uS11 family. Part of the 30S ribosomal subunit. Interacts with proteins S7 and S18. Binds to IF-3.

Located on the platform of the 30S subunit, it bridges several disparate RNA helices of the 16S rRNA. Forms part of the Shine-Dalgarno cleft in the 70S ribosome. The sequence is that of Small ribosomal subunit protein uS11 from Bartonella henselae (strain ATCC 49882 / DSM 28221 / CCUG 30454 / Houston 1) (Rochalimaea henselae).